Consider the following 125-residue polypeptide: Holo-[acyl-carrier-protein] synthase (125 aa).

Mg(2+)-binding residues include Asp8 and Glu56.

Belongs to the P-Pant transferase superfamily. AcpS family. Mg(2+) serves as cofactor.

The protein resides in the cytoplasm. It catalyses the reaction apo-[ACP] + CoA = holo-[ACP] + adenosine 3',5'-bisphosphate + H(+). Transfers the 4'-phosphopantetheine moiety from coenzyme A to a Ser of acyl-carrier-protein. The polypeptide is Holo-[acyl-carrier-protein] synthase (Borrelia hermsii (strain HS1 / DAH)).